The sequence spans 635 residues: MSQTTTTSASETLGFQAEVKQLLHLMIHSLYSNKEIFLRELVSNASDACDKLRFEAIDQPGLLEGDGELAIRVGYDKAARTITISDNGIGLSRDEAVANLGTIARSGTREFFSQLTGDKQKDAQLIGQFGVGFYSSFIVADKVTVLSRRAGLAANEAIRWESDGQGEFSIAPAEKAGRGTDVVLHLRADEDELLNGWKLREILRRYSDHISLPIRMAKEDWDAEKGEQVKGDELETVNQANALWTRNKSDITDEQYREFYKTVSHDYDDPLAWTHNRVEGRSEYTQLLYVPKHAPFDLWDRDARRGVKLYVKRVFIMDDAEQLLPSYLRFVRGVIDSADLPLNVSREILQESRDVRAIREGSAKRVLSLLEDMAENKAEDYATFWTEFGQVLKEGTGEDAANRERIARLLRFASTHDGEQAQTVSFADYVGRMKDGQDKIYYVTADTFTAAANSPHLEIFRKKGIEVLLLSDRVDEWMLSYLREFDGKSLVSVAKGGLDLAELADEEEKKRQSEVAETFKPLVERLQQALAEQVKEVRVTQRLVDSPACVVVGQNELSPHLLRMLKAAGQEAPEVKPVLEINPDHALVARIRDASDAEFGDWAALLLDQALLAEGAQIADPAAFVKRLNGLLLKA.

Positions 1–346 (MSQTTTTSAS…SADLPLNVSR (346 aa)) are a; substrate-binding. A b region spans residues 347–563 (EILQESRDVR…QNELSPHLLR (217 aa)). A c region spans residues 564–635 (MLKAAGQEAP…KRLNGLLLKA (72 aa)).

The protein belongs to the heat shock protein 90 family. In terms of assembly, homodimer.

Its subcellular location is the cytoplasm. Molecular chaperone. Has ATPase activity. This is Chaperone protein HtpG from Bordetella pertussis (strain Tohama I / ATCC BAA-589 / NCTC 13251).